The sequence spans 188 residues: RxLR effector protein Avh241 (188 aa).

The first 16 residues, 1-16 (MRQYCLLLIVLALAAA), serve as a signal peptide directing secretion. The RxLR-dEER signature appears at 43 to 58 (RLLRSEPQDEDTFEDR). The Host plasma membrane localization motif signature appears at 73–78 (GAAKAK).

It belongs to the RxLR effector family.

The protein resides in the secreted. It localises to the host cell membrane. Effector that triggers cell death in a variety of plant species (including tobacco, tomato and soybean), regardless of the Rps genes present. Avh241 interacts with the plant immune system via at least two different mechanisms, one recognized by plants dependent on subcellular localization and one promoting infection independent on membrane localization. The cell death triggered by Avh241 in N.benthamiana requires the two host mitogen-activated protein kinases, MEK2 and WIPK. The sequence is that of RxLR effector protein Avh241 from Phytophthora sojae (strain P6497) (Soybean stem and root rot agent).